The sequence spans 501 residues: L-arabinose isomerase (501 aa).

4 residues coordinate Mn(2+): Glu306, Glu333, His350, and His449.

The protein belongs to the arabinose isomerase family. It depends on Mn(2+) as a cofactor.

It catalyses the reaction beta-L-arabinopyranose = L-ribulose. It functions in the pathway carbohydrate degradation; L-arabinose degradation via L-ribulose; D-xylulose 5-phosphate from L-arabinose (bacterial route): step 1/3. Functionally, catalyzes the conversion of L-arabinose to L-ribulose. The polypeptide is L-arabinose isomerase (Mycolicibacterium smegmatis (strain ATCC 700084 / mc(2)155) (Mycobacterium smegmatis)).